A 37-amino-acid polypeptide reads, in one-letter code: Large ribosomal subunit protein bL36 (37 aa).

This sequence belongs to the bacterial ribosomal protein bL36 family.

The protein is Large ribosomal subunit protein bL36 of Rippkaea orientalis (strain PCC 8801 / RF-1) (Cyanothece sp. (strain PCC 8801)).